Reading from the N-terminus, the 145-residue chain is D-aminoacyl-tRNA deacylase (145 aa).

A Gly-cisPro motif, important for rejection of L-amino acids motif is present at residues 137-138 (GP).

This sequence belongs to the DTD family. As to quaternary structure, homodimer.

It localises to the cytoplasm. It catalyses the reaction glycyl-tRNA(Ala) + H2O = tRNA(Ala) + glycine + H(+). The catalysed reaction is a D-aminoacyl-tRNA + H2O = a tRNA + a D-alpha-amino acid + H(+). An aminoacyl-tRNA editing enzyme that deacylates mischarged D-aminoacyl-tRNAs. Also deacylates mischarged glycyl-tRNA(Ala), protecting cells against glycine mischarging by AlaRS. Acts via tRNA-based rather than protein-based catalysis; rejects L-amino acids rather than detecting D-amino acids in the active site. By recycling D-aminoacyl-tRNA to D-amino acids and free tRNA molecules, this enzyme counteracts the toxicity associated with the formation of D-aminoacyl-tRNA entities in vivo and helps enforce protein L-homochirality. The polypeptide is D-aminoacyl-tRNA deacylase (Salmonella paratyphi C (strain RKS4594)).